The following is a 372-amino-acid chain: Queuine tRNA-ribosyltransferase (372 aa).

Asp92 serves as the catalytic Proton acceptor. Residues 92-96, Asp146, Gln188, and Gly215 each bind substrate; that span reads DSGGY. Positions 246-252 are RNA binding; sequence GIGSLKE. The Nucleophile role is filled by Asp265. The interval 270 to 274 is RNA binding; important for wobble base 34 recognition; sequence TRLGR. Zn(2+) contacts are provided by Cys303, Cys305, Cys308, and His334.

It belongs to the queuine tRNA-ribosyltransferase family. In terms of assembly, homodimer. Within each dimer, one monomer is responsible for RNA recognition and catalysis, while the other monomer binds to the replacement base PreQ1. Requires Zn(2+) as cofactor.

The enzyme catalyses 7-aminomethyl-7-carbaguanine + guanosine(34) in tRNA = 7-aminomethyl-7-carbaguanosine(34) in tRNA + guanine. The protein operates within tRNA modification; tRNA-queuosine biosynthesis. In terms of biological role, catalyzes the base-exchange of a guanine (G) residue with the queuine precursor 7-aminomethyl-7-deazaguanine (PreQ1) at position 34 (anticodon wobble position) in tRNAs with GU(N) anticodons (tRNA-Asp, -Asn, -His and -Tyr). Catalysis occurs through a double-displacement mechanism. The nucleophile active site attacks the C1' of nucleotide 34 to detach the guanine base from the RNA, forming a covalent enzyme-RNA intermediate. The proton acceptor active site deprotonates the incoming PreQ1, allowing a nucleophilic attack on the C1' of the ribose to form the product. After dissociation, two additional enzymatic reactions on the tRNA convert PreQ1 to queuine (Q), resulting in the hypermodified nucleoside queuosine (7-(((4,5-cis-dihydroxy-2-cyclopenten-1-yl)amino)methyl)-7-deazaguanosine). The chain is Queuine tRNA-ribosyltransferase from Prochlorococcus marinus (strain MIT 9515).